An 883-amino-acid polypeptide reads, in one-letter code: DNA topoisomerase 1 (883 aa).

Positions 2–126 (PKLVIVESPT…TKRMVFHEIT (125 aa)) constitute a Toprim domain. 2 residues coordinate Mg(2+): Glu8 and Asp95. Residues 141–583 (DQRLVHAQET…QFYRGDRGLE (443 aa)) enclose the Topo IA-type catalytic domain. Residues 175-180 (SAGRVQ) are interaction with DNA. The segment at 271-294 (SLEEKPTTRKPAPPFTTSTLQQES) is disordered. The active-site O-(5'-phospho-DNA)-tyrosine intermediate is the Tyr320. The disordered stretch occupies residues 842 to 883 (AKAGQAKAKGGRRSTGTPKSGETKARTTKTTKKTTTRRTTSR). Over residues 867-883 (RTTKTTKKTTTRRTTSR) the composition is skewed to basic residues.

Belongs to the type IA topoisomerase family. As to quaternary structure, monomer. It depends on Mg(2+) as a cofactor.

The enzyme catalyses ATP-independent breakage of single-stranded DNA, followed by passage and rejoining.. Releases the supercoiling and torsional tension of DNA, which is introduced during the DNA replication and transcription, by transiently cleaving and rejoining one strand of the DNA duplex. Introduces a single-strand break via transesterification at a target site in duplex DNA. The scissile phosphodiester is attacked by the catalytic tyrosine of the enzyme, resulting in the formation of a DNA-(5'-phosphotyrosyl)-enzyme intermediate and the expulsion of a 3'-OH DNA strand. The free DNA strand then undergoes passage around the unbroken strand, thus removing DNA supercoils. Finally, in the religation step, the DNA 3'-OH attacks the covalent intermediate to expel the active-site tyrosine and restore the DNA phosphodiester backbone. The chain is DNA topoisomerase 1 from Synechococcus elongatus (strain ATCC 33912 / PCC 7942 / FACHB-805) (Anacystis nidulans R2).